The sequence spans 396 residues: Inositol-tetrakisphosphate 1-kinase (396 aa).

Residue K18 participates in 1D-myo-inositol 1,3,4-trisphosphate binding. R106 and K157 together coordinate ATP. The ATP-grasp domain occupies 117–325; it reads ETYMQDERIC…ITTILQRPDQ (209 aa). Residues H167 and K199 each coordinate 1D-myo-inositol 1,3,4-trisphosphate. Residues 188 to 199, S214, S232, and S236 contribute to the ATP site; that span reads QSFISHNAVLYK. Residues D281, D295, and N297 each contribute to the Mg(2+) site. 1D-myo-inositol 1,3,4-trisphosphate is bound at residue N297.

It belongs to the ITPK1 family. In terms of assembly, monomer. Requires Mg(2+) as cofactor.

The catalysed reaction is 1D-myo-inositol 3,4,5,6-tetrakisphosphate + ATP = 1D-myo-inositol 1,3,4,5,6-pentakisphosphate + ADP + H(+). It catalyses the reaction 1D-myo-inositol 1,3,4-trisphosphate + ATP = 1D-myo-inositol 1,3,4,5-tetrakisphosphate + ADP + H(+). It carries out the reaction 1D-myo-inositol 1,3,4-trisphosphate + ATP = 1D-myo-inositol 1,3,4,6-tetrakisphosphate + ADP + H(+). The enzyme catalyses 1D-myo-inositol 3,4,6-trisphosphate + ATP = 1D-myo-inositol 1,3,4,6-tetrakisphosphate + ADP + H(+). The catalysed reaction is 1D-myo-inositol 1,3,4-trisphosphate + 1D-myo-inositol 1,3,4,5,6-pentakisphosphate = 1D-myo-inositol 3,4,5,6-tetrakisphosphate + 1D-myo-inositol 1,3,4,6-tetrakisphosphate. It catalyses the reaction 1D-myo-inositol 1,3,4-trisphosphate + 1D-myo-inositol 1,3,4,5,6-pentakisphosphate = 1D-myo-inositol 3,4,5,6-tetrakisphosphate + 1D-myo-inositol 1,3,4,5-tetrakisphosphate. Kinase that can phosphorylate various inositol polyphosphate such as Ins(3,4,5,6)P4 or Ins(1,3,4)P3. Phosphorylates Ins(3,4,5,6)P4 at position 1 to form Ins(1,3,4,5,6)P5. This reaction is thought to have regulatory importance, since Ins(3,4,5,6)P4 is an inhibitor of plasma membrane Ca(2+)-activated Cl(-) channels, while Ins(1,3,4,5,6)P5 is not. Also phosphorylates Ins(1,3,4)P3 on O-5 and O-6 to form Ins(1,3,4,6)P4, an essential molecule in the hexakisphosphate (InsP6) pathway. Also acts as an inositol polyphosphate phosphatase that dephosphorylates Ins(1,3,4,5)P4 and Ins(1,3,4,6)P4 to Ins(1,3,4)P3, and Ins(1,3,4,5,6)P5 to Ins(3,4,5,6)P4. May also act as an isomerase that interconverts the inositol tetrakisphosphate isomers Ins(1,3,4,5)P4 and Ins(1,3,4,6)P4 in the presence of ADP and magnesium. Probably acts as the rate-limiting enzyme of the InsP6 pathway. Modifies TNF-alpha-induced apoptosis by interfering with the activation of TNFRSF1A-associated death domain. Plays an important role in MLKL-mediated necroptosis. Produces highly phosphorylated inositol phosphates such as inositolhexakisphosphate (InsP6) which bind to MLKL mediating the release of an N-terminal auto-inhibitory region leading to its activation. Essential for activated phospho-MLKL to oligomerize and localize to the cell membrane during necroptosis. The sequence is that of Inositol-tetrakisphosphate 1-kinase (itpk1) from Xenopus laevis (African clawed frog).